The following is a 147-amino-acid chain: Large ribosomal subunit protein bL9 (147 aa).

This sequence belongs to the bacterial ribosomal protein bL9 family.

Functionally, binds to the 23S rRNA. The protein is Large ribosomal subunit protein bL9 of Geotalea daltonii (strain DSM 22248 / JCM 15807 / FRC-32) (Geobacter daltonii).